A 39-amino-acid polypeptide reads, in one-letter code: Bacteriocin lactococcin-G subunit alpha (39 aa).

In terms of assembly, bacteriocin activity requires interaction of alpha and beta peptides in a molar ratio of 7:1 or 8:1 respectively.

In terms of biological role, kills Lactococci. The polypeptide is Bacteriocin lactococcin-G subunit alpha (Lactococcus lactis subsp. lactis (Streptococcus lactis)).